Here is a 571-residue protein sequence, read N- to C-terminus: MEDYSNLSLKSIPKRTCRIIFRTATILGICTLIVLCSSILHEIIHLDVSSGLMDSDDSQQGIIQPIIESLKSLIALANQILYNVAIIIPLKIDSIETVIFSALKDMHTGSMSNTNCTPGNLLLHDAAYINGINKFLVLKSYNGTPKYGPLLNIPSFIPSATSPNGCTRIPSFSLIKTHWCYTHNVMLGDCLDFTTSNQYLAMGIIQQSAAAFPIFRTMKTIYLSDGINRKSCSVTAIPGGCVLYCYVATRSEKEDYATTDLAELRLAFYYYNDTFIERVISLPNTTGQWATINPAVGSGIYHLGFILFPVYGGLISGTPSYNKQSSRYFIPKHPNITCAGNSSEQAAAARSSYVIRYHSNRLIQSAVLICPLSDMHTARCNLVMFNNSQVMMGAEGRLYVIDNNLYYYQRSSSWWSASLFYRINTDFSKGIPPIIEAQWVPSYQVPRPGVMPCNATSFCPANCITGVYADVWPLNDPEPTSQNALNPNYRFAGAFLRNESNRTNPTFYTASASALLNTTGFNNTNHKAAYTSSTCFKNTGTQKIYCLIIIEMGSSLLGEFQIIPFLRELIP.

At 1–25 (MEDYSNLSLKSIPKRTCRIIFRTAT) the chain is on the intravirion side. The chain crosses the membrane as a helical span at residues 26 to 46 (ILGICTLIVLCSSILHEIIHL). Over 47–571 (DVSSGLMDSD…IIPFLRELIP (525 aa)) the chain is Virion surface. 3 disulfides stabilise this stretch: Cys166–Cys190, Cys180–Cys241, and Cys232–Cys245. The tract at residues 228 to 233 (NRKSCS) is important for neuraminidase activity. Positions 228–233 (NRKSCS) are involved in neuraminidase activity. N-linked (GlcNAc...) asparagine; by host glycans are attached at residues Asn272, Asn284, Asn335, and Asn341. Cystine bridges form between Cys338-Cys459, Cys370-Cys380, and Cys453-Cys463. A glycan (N-linked (GlcNAc...) asparagine; by host) is linked at Asn386. Residues 393 to 398 (GAEGRL) are sialic receptor-binding site. Residues Asn454, Asn498, Asn501, Asn517, and Asn522 are each glycosylated (N-linked (GlcNAc...) asparagine; by host). An intrachain disulfide couples Cys535 to Cys546.

The protein belongs to the paramyxoviruses hemagglutinin-neuraminidase family. As to quaternary structure, homotetramer; composed of disulfide-linked homodimers. Interacts with F protein trimer.

It is found in the virion membrane. Its subcellular location is the host cell membrane. The enzyme catalyses Hydrolysis of alpha-(2-&gt;3)-, alpha-(2-&gt;6)-, alpha-(2-&gt;8)- glycosidic linkages of terminal sialic acid residues in oligosaccharides, glycoproteins, glycolipids, colominic acid and synthetic substrates.. Its function is as follows. Attaches the virus to sialic acid-containing cell receptors and thereby initiating infection. Binding of HN protein to the receptor induces a conformational change that allows the F protein to trigger virion/cell membranes fusion. Functionally, neuraminidase activity ensures the efficient spread of the virus by dissociating the mature virions from the neuraminic acid containing glycoproteins. This is Hemagglutinin-neuraminidase (HN) from Human parainfluenza 2 virus (strain Toshiba) (HPIV-2).